A 288-amino-acid polypeptide reads, in one-letter code: ATP synthase gamma chain (288 aa).

It belongs to the ATPase gamma chain family. In terms of assembly, F-type ATPases have 2 components, CF(1) - the catalytic core - and CF(0) - the membrane proton channel. CF(1) has five subunits: alpha(3), beta(3), gamma(1), delta(1), epsilon(1). CF(0) has three main subunits: a, b and c.

It is found in the cell inner membrane. In terms of biological role, produces ATP from ADP in the presence of a proton gradient across the membrane. The gamma chain is believed to be important in regulating ATPase activity and the flow of protons through the CF(0) complex. The chain is ATP synthase gamma chain from Vibrio parahaemolyticus serotype O3:K6 (strain RIMD 2210633).